Reading from the N-terminus, the 586-residue chain is MAFVSNGTEADEEGFEDAYENIPVASKMDLRCALEECTMALNLFLNNKFSEALELLRPWAKESIYHALGYSTILVMQSAMTFEPQDVQMGITTMKEALQTCQRFRKRNTVVESLSNLVSKQSGDQLTEEEMHAEICYAECLLQKAALTFVQDENMINFIKGGIKIRTSYQIYKECHQMYSLAASQGKMCSDTHYQFEGGVKLGIGAFNLMLSLLPSRVLRLLEFIGFSGNRELGLSQLREGASGSSIRAILCVLTLLFYHTYISLILGTGEANLEEAEALLEPYLKKFPNGSIILFYAARIDILKGRFEQAQETFQKCIVSQQEWKQIHHLCYWELMWCHSFQQDWLQAYRYADLLSKESKWSKATYVFQKAALLSMLPEDVVKTTGEDIVALFRQVESLKQRIAGKSIPTEKFAVRKSRRYISDNPVKLTLPALEMMYVWNGFTIVGKRADLTENVLVTIEKAEVALQNETKVTEYLADDLCLVQLLKGVCLKHLGRLLQAELCFNQVIQSEKRVKYDHYLIPFTFYELGLLYKEQGDRDKAIRYIETAKGNYKDYSLESRLHFRIHAALSSLKGSPVSTPTTPS.

3 TPR repeats span residues 292–325 (SIIL…QQEW), 483–516 (CLVQ…EKRV), and 524–557 (PFTF…YKDY).

The protein belongs to the TTC39 family.

May be involved in lipid metabolism. The polypeptide is Tetratricopeptide repeat protein 39B (ttc39b) (Xenopus laevis (African clawed frog)).